A 330-amino-acid polypeptide reads, in one-letter code: Ketol-acid reductoisomerase (NADP(+)) (330 aa).

The region spanning 2-182 (ARLYYDTDAN…GGTRAGILET (181 aa)) is the KARI N-terminal Rossmann domain. NADP(+) contacts are provided by residues 25–28 (YGSQ), Ser51, Ser53, and 83–86 (DEVQ). The active site involves His108. Gly134 lines the NADP(+) pocket. Positions 183–328 (TFREETETDL…RELRAMFSWL (146 aa)) constitute a KARI C-terminal knotted domain. Positions 191, 195, 227, and 231 each coordinate Mg(2+). Ser252 contacts substrate.

This sequence belongs to the ketol-acid reductoisomerase family. It depends on Mg(2+) as a cofactor.

The enzyme catalyses (2R)-2,3-dihydroxy-3-methylbutanoate + NADP(+) = (2S)-2-acetolactate + NADPH + H(+). It carries out the reaction (2R,3R)-2,3-dihydroxy-3-methylpentanoate + NADP(+) = (S)-2-ethyl-2-hydroxy-3-oxobutanoate + NADPH + H(+). The protein operates within amino-acid biosynthesis; L-isoleucine biosynthesis; L-isoleucine from 2-oxobutanoate: step 2/4. It participates in amino-acid biosynthesis; L-valine biosynthesis; L-valine from pyruvate: step 2/4. Its function is as follows. Involved in the biosynthesis of branched-chain amino acids (BCAA). Catalyzes an alkyl-migration followed by a ketol-acid reduction of (S)-2-acetolactate (S2AL) to yield (R)-2,3-dihydroxy-isovalerate. In the isomerase reaction, S2AL is rearranged via a Mg-dependent methyl migration to produce 3-hydroxy-3-methyl-2-ketobutyrate (HMKB). In the reductase reaction, this 2-ketoacid undergoes a metal-dependent reduction by NADPH to yield (R)-2,3-dihydroxy-isovalerate. The polypeptide is Ketol-acid reductoisomerase (NADP(+)) (Synechococcus sp. (strain JA-2-3B'a(2-13)) (Cyanobacteria bacterium Yellowstone B-Prime)).